The chain runs to 333 residues: uncharacterized protein (333 aa).

In terms of domain architecture, Radical SAM core spans 67 to 274 (HFYPTTQVVS…LEMARNLAIE (208 aa)). The [4Fe-4S] cluster site is built by C82, C86, and C89.

The cofactor is [4Fe-4S] cluster.

This is an uncharacterized protein from Methanocaldococcus jannaschii (strain ATCC 43067 / DSM 2661 / JAL-1 / JCM 10045 / NBRC 100440) (Methanococcus jannaschii).